A 219-amino-acid polypeptide reads, in one-letter code: Elongation factor Ts (219 aa).

Positions 82–85 are involved in Mg(2+) ion dislocation from EF-Tu; that stretch reads TDFV.

It belongs to the EF-Ts family.

The protein localises to the cytoplasm. Associates with the EF-Tu.GDP complex and induces the exchange of GDP to GTP. It remains bound to the aminoacyl-tRNA.EF-Tu.GTP complex up to the GTP hydrolysis stage on the ribosome. The protein is Elongation factor Ts of Anaeromyxobacter dehalogenans (strain 2CP-C).